Consider the following 98-residue polypeptide: uncharacterized protein (98 aa).

The segment at 1 to 63 (MPRDKKLVHR…NGHSQPAIVA (63 aa)) is disordered. Residues 14–29 (DVEDEDNDQREEEWSD) show a composition bias toward acidic residues. A compositionally biased stretch (polar residues) spans 48–57 (EPSSASNGHS).

This is an uncharacterized protein from Aedes vexans (Inland floodwater mosquito).